A 648-amino-acid chain; its full sequence is Serine/threonine-protein kinase DCLK3 (648 aa).

2 disordered regions span residues 86-127 (DDRA…HLGV) and 150-345 (QSLE…PRPM). Composition is skewed to basic and acidic residues over residues 98 to 127 (GKWE…HLGV), 213 to 234 (ELRR…DQES), 255 to 266 (EGLREVKKDTRP), 277 to 303 (LREH…EKKP), and 312 to 338 (TLRD…ERPS). The Protein kinase domain occupies 356–613 (YETGRVIGDG…AHQVLQHPWI (258 aa)). ATP-binding positions include 362–370 (IGDGNFAVV) and lysine 385. The active-site Proton acceptor is the aspartate 477. Residues 628–648 (VSPSSEGHFRSQHKRVVEQVS) form a disordered region.

Belongs to the protein kinase superfamily. CAMK Ser/Thr protein kinase family. CaMK subfamily.

The protein resides in the cytoplasm. It localises to the nucleus. The catalysed reaction is L-seryl-[protein] + ATP = O-phospho-L-seryl-[protein] + ADP + H(+). It carries out the reaction L-threonyl-[protein] + ATP = O-phospho-L-threonyl-[protein] + ADP + H(+). This chain is Serine/threonine-protein kinase DCLK3 (DCLK3), found in Homo sapiens (Human).